The primary structure comprises 119 residues: Large ribosomal subunit protein uL22 (119 aa).

The protein belongs to the universal ribosomal protein uL22 family. Part of the 50S ribosomal subunit.

Its function is as follows. This protein binds specifically to 23S rRNA; its binding is stimulated by other ribosomal proteins, e.g. L4, L17, and L20. It is important during the early stages of 50S assembly. It makes multiple contacts with different domains of the 23S rRNA in the assembled 50S subunit and ribosome. Functionally, the globular domain of the protein is located near the polypeptide exit tunnel on the outside of the subunit, while an extended beta-hairpin is found that lines the wall of the exit tunnel in the center of the 70S ribosome. In Trichodesmium erythraeum (strain IMS101), this protein is Large ribosomal subunit protein uL22.